We begin with the raw amino-acid sequence, 161 residues long: uncharacterized protein (161 aa).

A run of 4 helical transmembrane segments spans residues 22–42 (LFFI…VFGH), 43–63 (LTVG…ALLV), 89–109 (LAII…AGLG), and 110–130 (VVFG…LPVL). A disordered region spans residues 141 to 161 (VATYSSNGQTGGSEGRSASDD).

To M.leprae ML1138.

It is found in the cell membrane. This is an uncharacterized protein from Mycobacterium bovis (strain ATCC BAA-935 / AF2122/97).